Reading from the N-terminus, the 317-residue chain is L-lactate dehydrogenase (317 aa).

NAD(+)-binding positions include Val17, Asp38, Lys43, Tyr69, and 83–84 (GA). Positions 86 and 92 each coordinate substrate. NAD(+) contacts are provided by residues Ser105, 122 to 124 (ATN), and Ser147. Position 124–127 (124–127 (NPVD)) interacts with substrate. Substrate is bound at residue 152-155 (DTAR). Beta-D-fructose 1,6-bisphosphate is bound by residues Arg157 and His172. His179 (proton acceptor) is an active-site residue. A Phosphotyrosine modification is found at Tyr224. Thr233 contacts substrate.

This sequence belongs to the LDH/MDH superfamily. LDH family. Homotetramer.

Its subcellular location is the cytoplasm. The enzyme catalyses (S)-lactate + NAD(+) = pyruvate + NADH + H(+). It participates in fermentation; pyruvate fermentation to lactate; (S)-lactate from pyruvate: step 1/1. With respect to regulation, allosterically activated by fructose 1,6-bisphosphate (FBP). Functionally, catalyzes the conversion of lactate to pyruvate. This chain is L-lactate dehydrogenase, found in Bacillus caldotenax.